The following is a 102-amino-acid chain: Putative pterin-4-alpha-carbinolamine dehydratase (102 aa).

It belongs to the pterin-4-alpha-carbinolamine dehydratase family.

The enzyme catalyses (4aS,6R)-4a-hydroxy-L-erythro-5,6,7,8-tetrahydrobiopterin = (6R)-L-erythro-6,7-dihydrobiopterin + H2O. This is Putative pterin-4-alpha-carbinolamine dehydratase from Burkholderia ambifaria (strain ATCC BAA-244 / DSM 16087 / CCUG 44356 / LMG 19182 / AMMD) (Burkholderia cepacia (strain AMMD)).